Here is a 715-residue protein sequence, read N- to C-terminus: MANASLNGDQSKQQQQQQQQQQQQQNYYNPNAAQSFVPQGGYQQFQQFQPQQQQQQYGGYNQYNQYQGGYQQNYNNRGGYQQGYNNRGGYQQNYNNRGGYQGYNQNQQYGGYQQYNSQPQQQQQQQSQGMSLADFQKQKTEQQASLNKPAVKKTLKLAGSSGIKLANATKKVDTTSKPQSKESSPAPAPAASASASAPQEEKKEEKEAAAATPAAAPETKKETSAPAETKKEATPTPAAKNESTPIPAAAAKKESTPVSNSASVATADALVKEQEDEIDEEVVKDMFGGKDHVSIIFMGHVDAGKSTMGGNILYLTGSVDKRTVEKYEREAKDAGRQGWYLSWVMDTNKEERNDGKTIEVGKAYFETDKRRYTILDAPGHKMYVSEMIGGASQADVGILVISARKGEYETGFEKGGQTREHALLAKTQGVNKIIVVVNKMDDSTVGWSKERYQECTTKLGAFLKGIGYAKDDIIYMPVSGYTGAGLKDRVDPKDCPWYDGPSLLEYLDNMDTMNRKINGPFMMPVSGKMKDLGTIVEGKIESGHVKKGTNLIMMPNKTPIEVLTIFNETEQECDTAFSGEQVRLKIKGIEEEDLQPGYVLTSPKNPVKTVTRFEAQIAIVELKSILSNGFSCVMHLHTAIEEVKFIELKHKLEKGTNRKSKKPPAFAKKGMKIIAILEVGELVCAETYKDYPQLGRFTLRDQGTTIAIGKITKLL.

Positions 1–12 are enriched in polar residues; sequence MANASLNGDQSK. Disordered regions lie at residues 1 to 148 and 168 to 262; these read MANA…SLNK and ATKK…SNSA. The segment at 5 to 128 is several sort of repeats; sequence SLNGDQSKQQ…PQQQQQQQSQ (124 aa). The span at 13–25 shows a compositional bias: low complexity; it reads QQQQQQQQQQQQQ. Over residues 26–37 the composition is skewed to polar residues; that stretch reads NYYNPNAAQSFV. Low complexity-rich tracts occupy residues 39-129 and 176-198; these read QGGY…QSQG and SKPQ…ASAP. Residues 129–285 are charged; the sequence is GMSLADFQKQ…DEIDEEVVKD (157 aa). Basic and acidic residues-rich tracts occupy residues 199-208 and 218-233; these read QEEKKEEKEA and ETKK…KKEA. In terms of domain architecture, tr-type G spans 290–515; that stretch reads KDHVSIIFMG…YLDNMDTMNR (226 aa). The tract at residues 299 to 306 is G1; it reads GHVDAGKS. 299 to 306 lines the GTP pocket; sequence GHVDAGKS. Positions 355-359 are G2; the sequence is GKTIE. Thr373 is subject to Phosphothreonine. Positions 376 to 379 are G3; sequence DAPG. GTP contacts are provided by residues 376–380 and 438–441; these read DAPGH and NKMD. The segment at 438–441 is G4; that stretch reads NKMD. The tract at residues 479-481 is G5; the sequence is SGY.

Belongs to the TRAFAC class translation factor GTPase superfamily. Classic translation factor GTPase family. ERF3 subfamily.

It is found in the cytoplasm. In terms of biological role, involved in translation termination. Stimulates the activity of ERF1. Binds guanine nucleotides. The protein is Eukaryotic peptide chain release factor GTP-binding subunit (SUP35) of Candida albicans (Yeast).